The primary structure comprises 200 residues: Holliday junction branch migration complex subunit RuvA (200 aa).

Positions 1 to 63 (MIALVQGRVA…EDSLTLFGFA (63 aa)) are domain I. The interval 64–138 (DADERDVFEL…DRLGPAQGAA (75 aa)) is domain II. Residues 138 to 142 (APAAP) form a flexible linker region. Residues 143–200 (VAVDDGADVVDALVGLGWPVRQAQDAVRGVLEDADGTAPDAAGLLRAALRSLAGDARG) are domain III.

Belongs to the RuvA family. In terms of assembly, homotetramer. Forms an RuvA(8)-RuvB(12)-Holliday junction (HJ) complex. HJ DNA is sandwiched between 2 RuvA tetramers; dsDNA enters through RuvA and exits via RuvB. An RuvB hexamer assembles on each DNA strand where it exits the tetramer. Each RuvB hexamer is contacted by two RuvA subunits (via domain III) on 2 adjacent RuvB subunits; this complex drives branch migration. In the full resolvosome a probable DNA-RuvA(4)-RuvB(12)-RuvC(2) complex forms which resolves the HJ.

It is found in the cytoplasm. Functionally, the RuvA-RuvB-RuvC complex processes Holliday junction (HJ) DNA during genetic recombination and DNA repair, while the RuvA-RuvB complex plays an important role in the rescue of blocked DNA replication forks via replication fork reversal (RFR). RuvA specifically binds to HJ cruciform DNA, conferring on it an open structure. The RuvB hexamer acts as an ATP-dependent pump, pulling dsDNA into and through the RuvAB complex. HJ branch migration allows RuvC to scan DNA until it finds its consensus sequence, where it cleaves and resolves the cruciform DNA. This chain is Holliday junction branch migration complex subunit RuvA, found in Beutenbergia cavernae (strain ATCC BAA-8 / DSM 12333 / CCUG 43141 / JCM 11478 / NBRC 16432 / NCIMB 13614 / HKI 0122).